A 202-amino-acid polypeptide reads, in one-letter code: Nucleoside triphosphate pyrophosphatase (202 aa).

Catalysis depends on D79, which acts as the Proton acceptor.

Belongs to the Maf family. A divalent metal cation is required as a cofactor.

Its subcellular location is the cytoplasm. The catalysed reaction is a ribonucleoside 5'-triphosphate + H2O = a ribonucleoside 5'-phosphate + diphosphate + H(+). It catalyses the reaction a 2'-deoxyribonucleoside 5'-triphosphate + H2O = a 2'-deoxyribonucleoside 5'-phosphate + diphosphate + H(+). Nucleoside triphosphate pyrophosphatase. May have a dual role in cell division arrest and in preventing the incorporation of modified nucleotides into cellular nucleic acids. In Nitrobacter hamburgensis (strain DSM 10229 / NCIMB 13809 / X14), this protein is Nucleoside triphosphate pyrophosphatase.